A 291-amino-acid polypeptide reads, in one-letter code: Protein CMSS1 (291 aa).

The segment at methionine 1 to serine 96 is disordered. Acidic residues predominate over residues aspartate 17–histidine 27. The segment covering valine 58–lysine 79 has biased composition (basic and acidic residues).

This sequence belongs to the CMS1 family.

This Danio rerio (Zebrafish) protein is Protein CMSS1 (cmss1).